Here is a 165-residue protein sequence, read N- to C-terminus: Transcription factor E (165 aa).

The 83-residue stretch at 5–87 (NDPVVRGYLL…LWQLDLSDIE (83 aa)) folds into the HTH TFE/IIEalpha-type domain.

It belongs to the TFE family. Monomer. Interaction with RNA polymerase subunits RpoF and RpoE is necessary for Tfe stimulatory transcription activity. Able to interact with Tbp and RNA polymerase in the absence of DNA promoter. Interacts both with the preinitiation and elongation complexes.

Its function is as follows. Transcription factor that plays a role in the activation of archaeal genes transcribed by RNA polymerase. Facilitates transcription initiation by enhancing TATA-box recognition by TATA-box-binding protein (Tbp), and transcription factor B (Tfb) and RNA polymerase recruitment. Not absolutely required for transcription in vitro, but particularly important in cases where Tbp or Tfb function is not optimal. It dynamically alters the nucleic acid-binding properties of RNA polymerases by stabilizing the initiation complex and destabilizing elongation complexes. Seems to translocate with the RNA polymerase following initiation and acts by binding to the non template strand of the transcription bubble in elongation complexes. In Methanococcoides burtonii (strain DSM 6242 / NBRC 107633 / OCM 468 / ACE-M), this protein is Transcription factor E.